Consider the following 466-residue polypeptide: Muscarinic acetylcholine receptor M2 (466 aa).

Over 1 to 25 (MNNSTYINSSSENVIALESPYKTIE) the chain is Extracellular. Asn-2, Asn-3, and Asn-8 each carry an N-linked (GlcNAc...) asparagine glycan. A helical membrane pass occupies residues 26–48 (VVFIVLVAGSLSLVTIIGNILVM). The Cytoplasmic segment spans residues 49-62 (VSIKVNRHLQTVNN). The chain crosses the membrane as a helical span at residues 63-83 (YFLFSLACADLIIGIFSMNLY). Over 84 to 100 (TLYTVIGYWPLGPVVCD) the chain is Extracellular. Cys-99 and Cys-179 are joined by a disulfide. A helical membrane pass occupies residues 101 to 122 (LWLALDYVVSNASVMNLLIISF). An Important for signaling motif is present at residues 123 to 125 (DRY). Topologically, residues 123-142 (DRYFCVTKPLTYPVKRTTKM) are cytoplasmic. Residues 143–165 (AGMMIAAAWVLSFILWAPAILFW) form a helical membrane-spanning segment. Over 166–187 (QFIVGGRTVPDKDCYIQFFSNP) the chain is Extracellular. Residues 188 to 212 (AVTFGTAIAAFYLPVIIMTVLYWQI) form a helical membrane-spanning segment. At 213-387 (SRASKSRIKK…PPSREKKVTR (175 aa)) the chain is on the cytoplasmic side. 2 disordered regions span residues 223–265 (GKKE…KVQN) and 279–315 (QGEEKDSSNDSTSVSVVPSNTKEDEAAKDASQISASQ). Polar residues-rich tracts occupy residues 228–238 (AQNQDPVSPSL) and 246–256 (PNNNNIPTSSD). Residues 287–298 (NDSTSVSVVPSN) are compositionally biased toward low complexity. The helical transmembrane segment at 388 to 410 (TILAILLAFIITWTPYNVMVLIN) threads the bilayer. The Extracellular portion of the chain corresponds to 411–418 (SFCASCIP). A disulfide bridge links Cys-413 with Cys-416. The helical transmembrane segment at 419-442 (GTVWTIGYWLCYINSTINPACYAL) threads the bilayer. An Important for signaling motif is present at residues 436 to 440 (NPACY). Topologically, residues 443–466 (CNATFKKTFKHLLMCHYKNIGATR) are cytoplasmic. Phosphothreonine is present on residues Thr-446, Thr-450, and Thr-465.

The protein belongs to the G-protein coupled receptor 1 family. Muscarinic acetylcholine receptor subfamily. CHRM2 sub-subfamily.

It localises to the cell membrane. It is found in the postsynaptic cell membrane. Its function is as follows. The muscarinic acetylcholine receptor mediates various cellular responses, including inhibition of adenylate cyclase, breakdown of phosphoinositides and modulation of potassium channels through the action of G proteins. Primary transducing effect is adenylate cyclase inhibition. Signaling promotes phospholipase C activity, leading to the release of inositol trisphosphate (IP3); this then triggers calcium ion release into the cytosol. The chain is Muscarinic acetylcholine receptor M2 (CHRM2) from Gallus gallus (Chicken).